A 205-amino-acid polypeptide reads, in one-letter code: Large ribosomal subunit protein uL4 (205 aa).

The tract at residues 45 to 97 (RQGTSAVKNRSAVRGGGKKPWRQKGTGRARQGSIRAPQWRGGGTVFGPTPRSY) is disordered. Residues 60 to 71 (GGKKPWRQKGTG) are compositionally biased toward basic residues.

It belongs to the universal ribosomal protein uL4 family. As to quaternary structure, part of the 50S ribosomal subunit.

In terms of biological role, one of the primary rRNA binding proteins, this protein initially binds near the 5'-end of the 23S rRNA. It is important during the early stages of 50S assembly. It makes multiple contacts with different domains of the 23S rRNA in the assembled 50S subunit and ribosome. Its function is as follows. Forms part of the polypeptide exit tunnel. The sequence is that of Large ribosomal subunit protein uL4 from Lactobacillus johnsonii (strain CNCM I-12250 / La1 / NCC 533).